We begin with the raw amino-acid sequence, 212 residues long: Pyridoxine/pyridoxamine 5'-phosphate oxidase (212 aa).

Residues 7 to 10 and Lys65 contribute to the substrate site; that span reads RREY. FMN is bound by residues 60-65, 75-76, Arg81, Lys82, and Gln104; these read RIVLLK and FT. Substrate-binding residues include Tyr122, Arg126, and Ser130. Residues 139–140 and Trp184 contribute to the FMN site; that span reads QS. Residue 190–192 coordinates substrate; it reads RLH. Arg194 contacts FMN.

This sequence belongs to the pyridoxamine 5'-phosphate oxidase family. As to quaternary structure, homodimer. FMN serves as cofactor.

The enzyme catalyses pyridoxamine 5'-phosphate + O2 + H2O = pyridoxal 5'-phosphate + H2O2 + NH4(+). It carries out the reaction pyridoxine 5'-phosphate + O2 = pyridoxal 5'-phosphate + H2O2. It functions in the pathway cofactor metabolism; pyridoxal 5'-phosphate salvage; pyridoxal 5'-phosphate from pyridoxamine 5'-phosphate: step 1/1. Its pathway is cofactor metabolism; pyridoxal 5'-phosphate salvage; pyridoxal 5'-phosphate from pyridoxine 5'-phosphate: step 1/1. Catalyzes the oxidation of either pyridoxine 5'-phosphate (PNP) or pyridoxamine 5'-phosphate (PMP) into pyridoxal 5'-phosphate (PLP). This Pseudoalteromonas translucida (strain TAC 125) protein is Pyridoxine/pyridoxamine 5'-phosphate oxidase.